The following is a 239-amino-acid chain: Large ribosomal subunit protein uL1 (239 aa).

Belongs to the universal ribosomal protein uL1 family. Part of the 50S ribosomal subunit.

Binds directly to 23S rRNA. The L1 stalk is quite mobile in the ribosome, and is involved in E site tRNA release. Its function is as follows. Protein L1 is also a translational repressor protein, it controls the translation of the L11 operon by binding to its mRNA. This is Large ribosomal subunit protein uL1 from Rickettsia conorii (strain ATCC VR-613 / Malish 7).